We begin with the raw amino-acid sequence, 42 residues long: Photosystem II reaction center protein J (42 aa).

Residues 10–30 form a helical membrane-spanning segment; sequence IPLWLVLTIIGLAAIALLALF.

Belongs to the PsbJ family. PSII is composed of 1 copy each of membrane proteins PsbA, PsbB, PsbC, PsbD, PsbE, PsbF, PsbH, PsbI, PsbJ, PsbK, PsbL, PsbM, PsbT, PsbY, PsbZ, Psb30/Ycf12, at least 3 peripheral proteins of the oxygen-evolving complex and a large number of cofactors. It forms dimeric complexes.

The protein resides in the plastid. It is found in the chloroplast thylakoid membrane. In terms of biological role, this protein is a component of the reaction center of photosystem II. One of the components of the core complex of photosystem II (PSII). PSII is a light-driven water:plastoquinone oxidoreductase that uses light energy to abstract electrons from H(2)O, generating O(2) and a proton gradient subsequently used for ATP formation. It consists of a core antenna complex that captures photons, and an electron transfer chain that converts photonic excitation into a charge separation. The polypeptide is Photosystem II reaction center protein J (Euglena gracilis).